Reading from the N-terminus, the 569-residue chain is Glutamate--tRNA ligase (569 aa).

Positions 99-109 (PEPNGYPTLGH) match the 'HIGH' region motif.

This sequence belongs to the class-I aminoacyl-tRNA synthetase family. Glutamate--tRNA ligase type 2 subfamily.

The protein localises to the cytoplasm. The enzyme catalyses tRNA(Glu) + L-glutamate + ATP = L-glutamyl-tRNA(Glu) + AMP + diphosphate. Catalyzes the attachment of glutamate to tRNA(Glu) in a two-step reaction: glutamate is first activated by ATP to form Glu-AMP and then transferred to the acceptor end of tRNA(Glu). This Korarchaeum cryptofilum (strain OPF8) protein is Glutamate--tRNA ligase.